Here is a 205-residue protein sequence, read N- to C-terminus: NADH-quinone oxidoreductase subunit J (205 aa).

The next 5 membrane-spanning stretches (helical) occupy residues 1 to 21 (MPIF…CVVL), 26 to 46 (VYSV…MILL), 54 to 74 (LLIV…IMML), 89 to 109 (LSLS…TVIL), and 142 to 162 (FMLP…SCIT).

This sequence belongs to the complex I subunit 6 family.

It is found in the cell membrane. The catalysed reaction is a quinone + NADH + 5 H(+)(in) = a quinol + NAD(+) + 4 H(+)(out). In terms of biological role, NDH-1 shuttles electrons from NADH, via FMN and iron-sulfur (Fe-S) centers, to quinones in the respiratory chain. Couples the redox reaction to proton translocation (for every two electrons transferred, four hydrogen ions are translocated across the cytoplasmic membrane), and thus conserves the redox energy in a proton gradient. This chain is NADH-quinone oxidoreductase subunit J (nuoJ), found in Rickettsia typhi (strain ATCC VR-144 / Wilmington).